We begin with the raw amino-acid sequence, 223 residues long: Endonuclease NucS (223 aa).

This sequence belongs to the NucS endonuclease family.

Its subcellular location is the cytoplasm. Functionally, cleaves both 3' and 5' ssDNA extremities of branched DNA structures. This is Endonuclease NucS from Mycolicibacterium vanbaalenii (strain DSM 7251 / JCM 13017 / BCRC 16820 / KCTC 9966 / NRRL B-24157 / PYR-1) (Mycobacterium vanbaalenii).